Here is a 360-residue protein sequence, read N- to C-terminus: Hydroxycarboxylic acid receptor 2 (360 aa).

Topologically, residues 1–30 (MSKQNHFLVINGKNCCVFRDENIAKVLPPV) are extracellular. The chain crosses the membrane as a helical span at residues 31–51 (LGLEFVFGLLGNGLALWIFCF). Over 52–60 (HLKSWKSSR) the chain is Cytoplasmic. A helical transmembrane segment spans residues 61–81 (IFLFNLAVADFLLIICLPFLT). The Extracellular segment spans residues 82–98 (DNYVQNWDWRFGSIPCR). A disulfide bridge connects residues cysteine 97 and cysteine 174. The helical transmembrane segment at 99–119 (VMLFMLAMNRQGSIIFLTVVA) threads the bilayer. The Cytoplasmic portion of the chain corresponds to 120–140 (VDRYFRVVHPHHFLNKISNRT). A helical membrane pass occupies residues 141–161 (AAIISCFLWGITIGLTVHLLY). Residues 162–189 (TDMMTRNGDANLCSSFSICYTFRWHDAM) lie on the Extracellular side of the membrane. A helical membrane pass occupies residues 190-210 (FLLEFFLPLGIILFCSGRIIW). Over 211–226 (SLRQRQMDRHVKIKRA) the chain is Cytoplasmic. The helical transmembrane segment at 227–247 (INFIMVVAIVFVICFLPSVAV) threads the bilayer. At 248 to 270 (RIRIFWLLYKHNVRNCDIYSSVD) the chain is on the extracellular side. Residues 271 to 291 (LAFFTTLSFTYMNSMLDPVVY) traverse the membrane as a helical segment. Topologically, residues 292–360 (YFSSPSFPNF…SPPYLASTSR (69 aa)) are cytoplasmic. The segment at 320–360 (NNRSTSVELTGDPSTIRSIPGALMTDPSEPGSPPYLASTSR) is disordered. Residues 321–336 (NRSTSVELTGDPSTIR) are compositionally biased toward polar residues. Serine 325 bears the Phosphoserine mark.

It belongs to the G-protein coupled receptor 1 family. Expressed in adipose tissue, lung and spleen.

It localises to the cell membrane. Its function is as follows. Acts as a high affinity receptor for both nicotinic acid (also known as niacin) and (D)-beta-hydroxybutyrate and mediates increased adiponectin secretion and decreased lipolysis through G(i)-protein-mediated inhibition of adenylyl cyclase. This pharmacological effect requires nicotinic acid doses that are much higher than those provided by a normal diet. Mediates nicotinic acid-induced apoptosis in mature neutrophils. Receptor activation by nicotinic acid results in reduced cAMP levels which may affect activity of cAMP-dependent protein kinase A and phosphorylation of target proteins, leading to neutrophil apoptosis. The rank order of potency for the displacement of nicotinic acid binding is 5-methyl pyrazole-3-carboxylic acid = pyridine-3-acetic acid &gt; acifran &gt; 5-methyl nicotinic acid = acipimox &gt;&gt; nicotinuric acid = nicotinamide. The protein is Hydroxycarboxylic acid receptor 2 (Hcar2) of Rattus norvegicus (Rat).